The following is a 171-amino-acid chain: Small ribosomal subunit protein uS5 (171 aa).

Residues 15 to 78 enclose the S5 DRBM domain; that stretch reads LEEKVVKINR…EKAKKQLVRI (64 aa).

The protein belongs to the universal ribosomal protein uS5 family. Part of the 30S ribosomal subunit. Contacts proteins S4 and S8.

Functionally, with S4 and S12 plays an important role in translational accuracy. In terms of biological role, located at the back of the 30S subunit body where it stabilizes the conformation of the head with respect to the body. The protein is Small ribosomal subunit protein uS5 of Onion yellows phytoplasma (strain OY-M).